The chain runs to 516 residues: Cytochrome P450 1A2 (516 aa).

Residue serine 69 is glycosylated (O-linked (GlcNAc) serine). Phenylalanine 226 provides a ligand contact to substrate. A heme-binding site is contributed by cysteine 458.

Belongs to the cytochrome P450 family. As to quaternary structure, interacts with PGRMC1; the interaction requires PGRMC1 homodimerization. Requires heme as cofactor.

It localises to the endoplasmic reticulum membrane. Its subcellular location is the microsome membrane. The catalysed reaction is an organic molecule + reduced [NADPH--hemoprotein reductase] + O2 = an alcohol + oxidized [NADPH--hemoprotein reductase] + H2O + H(+). It catalyses the reaction 17beta-estradiol + reduced [NADPH--hemoprotein reductase] + O2 = 2-hydroxy-17beta-estradiol + oxidized [NADPH--hemoprotein reductase] + H2O + H(+). It carries out the reaction 17beta-estradiol + reduced [NADPH--hemoprotein reductase] + O2 = 4-hydroxy-17beta-estradiol + oxidized [NADPH--hemoprotein reductase] + H2O + H(+). The enzyme catalyses estrone + reduced [NADPH--hemoprotein reductase] + O2 = 2-hydroxyestrone + oxidized [NADPH--hemoprotein reductase] + H2O + H(+). The catalysed reaction is estrone + reduced [NADPH--hemoprotein reductase] + O2 = 4-hydroxyestrone + oxidized [NADPH--hemoprotein reductase] + H2O + H(+). It catalyses the reaction cholesterol + reduced [NADPH--hemoprotein reductase] + O2 = 25-hydroxycholesterol + oxidized [NADPH--hemoprotein reductase] + H2O + H(+). It carries out the reaction all-trans-retinol + reduced [NADPH--hemoprotein reductase] + O2 = all-trans-retinal + oxidized [NADPH--hemoprotein reductase] + 2 H2O + H(+). The enzyme catalyses all-trans-retinal + reduced [NADPH--hemoprotein reductase] + O2 = all-trans-retinoate + oxidized [NADPH--hemoprotein reductase] + H2O + 2 H(+). The catalysed reaction is (5Z,8Z,11Z,14Z)-eicosatetraenoate + reduced [NADPH--hemoprotein reductase] + O2 = (14R,15S)-epoxy-(5Z,8Z,11Z)-eicosatrienoate + oxidized [NADPH--hemoprotein reductase] + H2O + H(+). It catalyses the reaction (5Z,8Z,11Z,14Z)-eicosatetraenoate + reduced [NADPH--hemoprotein reductase] + O2 = (14S,15R)-epoxy-(5Z,8Z,11Z)-eicosatrienoate + oxidized [NADPH--hemoprotein reductase] + H2O + H(+). It carries out the reaction (5Z,8Z,11Z,14Z,17Z)-eicosapentaenoate + reduced [NADPH--hemoprotein reductase] + O2 = (17R,18S)-epoxy-(5Z,8Z,11Z,14Z)-eicosatetraenoate + oxidized [NADPH--hemoprotein reductase] + H2O + H(+). The enzyme catalyses (4Z,7Z,10Z,13Z,16Z,19Z)-docosahexaenoate + reduced [NADPH--hemoprotein reductase] + O2 = (19R,20S)-epoxy-(4Z,7Z,10Z,13Z,16Z)-docosapentaenoate + oxidized [NADPH--hemoprotein reductase] + H2O + H(+). The catalysed reaction is (5S)-hydroperoxy-(6E,8Z,11Z,14Z)-eicosatetraenoate = 5-oxo-(6E,8Z,11Z,14Z)-eicosatetraenoate + H2O. It catalyses the reaction (12S)-hydroperoxy-(5Z,8Z,10E,14Z)-eicosatetraenoate = 12-oxo-(5Z,8Z,10E,14Z)-eicosatetraenoate + H2O. It carries out the reaction (15S)-hydroperoxy-(5Z,8Z,11Z,13E)-eicosatetraenoate = 15-oxo-(5Z,8Z,11Z,13E)-eicosatetraenoate + H2O. The enzyme catalyses (13S)-hydroperoxy-(9Z,11E)-octadecadienoate = 13-oxo-(9Z,11E)-octadecadienoate + H2O. The catalysed reaction is (5Z,8Z,11Z,14Z)-eicosatetraenoate + reduced [NADPH--hemoprotein reductase] + O2 = 13-hydroxy-(5Z,8Z,11Z,14Z)-eicosatetraenoate + oxidized [NADPH--hemoprotein reductase] + H2O + H(+). It catalyses the reaction (5Z,8Z,11Z,14Z)-eicosatetraenoate + reduced [NADPH--hemoprotein reductase] + O2 = 19-hydroxy-(5Z,8Z,11Z,14Z)-eicosatetraenoate + oxidized [NADPH--hemoprotein reductase] + H2O + H(+). It carries out the reaction (9Z,12Z)-octadecadienoate + reduced [NADPH--hemoprotein reductase] + O2 = 11-hydroxy-(9Z,12Z)-octadecadienoate + oxidized [NADPH--hemoprotein reductase] + H2O + H(+). It participates in cofactor metabolism; retinol metabolism. The protein operates within steroid metabolism; cholesterol metabolism. Its pathway is lipid metabolism; arachidonate metabolism. Its function is as follows. A cytochrome P450 monooxygenase involved in the metabolism of various endogenous substrates, including fatty acids, steroid hormones and vitamins. Mechanistically, uses molecular oxygen inserting one oxygen atom into a substrate, and reducing the second into a water molecule, with two electrons provided by NADPH via cytochrome P450 reductase (NADPH--hemoprotein reductase). Catalyzes the hydroxylation of carbon-hydrogen bonds. Exhibits high catalytic activity for the formation of hydroxyestrogens from estrone (E1) and 17beta-estradiol (E2), namely 2-hydroxy E1 and E2. Metabolizes cholesterol toward 25-hydroxycholesterol, a physiological regulator of cellular cholesterol homeostasis. May act as a major enzyme for all-trans retinoic acid biosynthesis in the liver. Catalyzes two successive oxidative transformation of all-trans retinol to all-trans retinal and then to the active form all-trans retinoic acid. Primarily catalyzes stereoselective epoxidation of the last double bond of polyunsaturated fatty acids (PUFA), displaying a strong preference for the (R,S) stereoisomer. Catalyzes bisallylic hydroxylation and omega-1 hydroxylation of PUFA. May also participate in eicosanoids metabolism by converting hydroperoxide species into oxo metabolites (lipoxygenase-like reaction, NADPH-independent). Plays a role in the oxidative metabolism of xenobiotics. Catalyzes the N-hydroxylation of heterocyclic amines and the O-deethylation of phenacetin. Metabolizes caffeine via N3-demethylation. The chain is Cytochrome P450 1A2 (CYP1A2) from Pongo abelii (Sumatran orangutan).